We begin with the raw amino-acid sequence, 271 residues long: 3-methyl-2-oxobutanoate hydroxymethyltransferase (271 aa).

Positions 51 and 90 each coordinate Mg(2+). 3-methyl-2-oxobutanoate contacts are provided by residues 51 to 52 (DS), Asp90, and Lys119. Mg(2+) is bound at residue Glu121. The Proton acceptor role is filled by Glu188.

This sequence belongs to the PanB family. Homodecamer; pentamer of dimers. The cofactor is Mg(2+).

Its subcellular location is the cytoplasm. It catalyses the reaction 3-methyl-2-oxobutanoate + (6R)-5,10-methylene-5,6,7,8-tetrahydrofolate + H2O = 2-dehydropantoate + (6S)-5,6,7,8-tetrahydrofolate. The protein operates within cofactor biosynthesis; (R)-pantothenate biosynthesis; (R)-pantoate from 3-methyl-2-oxobutanoate: step 1/2. Functionally, catalyzes the reversible reaction in which hydroxymethyl group from 5,10-methylenetetrahydrofolate is transferred onto alpha-ketoisovalerate to form ketopantoate. The chain is 3-methyl-2-oxobutanoate hydroxymethyltransferase from Azoarcus sp. (strain BH72).